A 417-amino-acid polypeptide reads, in one-letter code: Ribonucleoside-diphosphate reductase small chain (417 aa).

Fe cation is bound by residues Asp168, Glu199, and His202. Tyr206 is an active-site residue. Positions 261, 297, and 300 each coordinate Fe cation.

It belongs to the ribonucleoside diphosphate reductase small chain family. As to quaternary structure, heterotetramer composed of a homodimer of the large subunit (R1) and a homodimer of the small subunit (R2). Larger multisubunit protein complex are also active, composed of (R1)n(R2)n. The cofactor is Fe cation.

It carries out the reaction a 2'-deoxyribonucleoside 5'-diphosphate + [thioredoxin]-disulfide + H2O = a ribonucleoside 5'-diphosphate + [thioredoxin]-dithiol. Ribonucleoside-diphosphate reductase holoenzyme provides the precursors necessary for viral DNA synthesis. Allows virus growth in non-dividing cells. Catalyzes the biosynthesis of deoxyribonucleotides from the corresponding ribonucleotides. This Acanthamoeba polyphaga mimivirus (APMV) protein is Ribonucleoside-diphosphate reductase small chain (RNR2).